The chain runs to 142 residues: Transcription antitermination protein NusB (142 aa).

Belongs to the NusB family.

Functionally, involved in transcription antitermination. Required for transcription of ribosomal RNA (rRNA) genes. Binds specifically to the boxA antiterminator sequence of the ribosomal RNA (rrn) operons. In Buchnera aphidicola subsp. Cinara cedri (strain Cc), this protein is Transcription antitermination protein NusB.